The following is a 105-amino-acid chain: Large ribosomal subunit protein uL23 (105 aa).

It belongs to the universal ribosomal protein uL23 family. Part of the 50S ribosomal subunit. Contacts protein L29, and trigger factor when it is bound to the ribosome.

Its function is as follows. One of the early assembly proteins it binds 23S rRNA. One of the proteins that surrounds the polypeptide exit tunnel on the outside of the ribosome. Forms the main docking site for trigger factor binding to the ribosome. The protein is Large ribosomal subunit protein uL23 of Ureaplasma parvum serovar 3 (strain ATCC 27815 / 27 / NCTC 11736).